A 560-amino-acid chain; its full sequence is Zorya protein ZorC (560 aa).

In terms of biological role, component of antiviral defense system Zorya type I, composed of ZorA, ZorB, ZorC and ZorD. Expression of Zorya type I in E.coli (strain MG1655) confers 10,000-fold resistance to phage SECphi27, 100-fold resistance to lambda, and 10-fold resistance to T7. While most T7 infected Zorya-containing cells undergo abortive infection, a minority produce viable phage progeny. These eventually accumulate to a high multiplicity of infection, leading to culture collapse by 2 hours after initial infection. ZorA and ZorB probably assemble in the cell inner membrane and exert their effect there. This Escherichia coli O139:H28 (strain E24377A / ETEC) protein is Zorya protein ZorC.